A 397-amino-acid polypeptide reads, in one-letter code: LIM/homeobox protein Lhx3 (397 aa).

2 LIM zinc-binding domains span residues 31–81 (CAGC…CKDD) and 90–144 (CAAC…CKAD). Thr-63 carries the post-translational modification Phosphothreonine. Residue Ser-71 is modified to Phosphoserine. Positions 157-216 (AKRPRTTITAKQLETLKSAYNTSPKPARHVREQLSSETGLDMRVVQVWFQNRRAKEKRLK) form a DNA-binding region, homeobox. Positions 212–397 (EKRLKKDAGR…WLDEVDHAQF (186 aa)) are disordered. Tyr-227 is modified (phosphotyrosine). Ser-234 and Ser-238 each carry phosphoserine. Positions 316-331 (GVPPSPAAPQSLPGPQ) are enriched in pro residues.

Interacts with POU1F1. At neuronal promoters, interacts with LDB1, in motor neurons LDB1 is displaced by ISL1 and a ternary complex is formed in which ISL1 contacts both LHX3 and LDB1; allosteric structural changes in the DNA binding domain of LHX3, induced by the ISL1-LHX3 interaction, may explain differences in sequence specificity of the different complexes. Interacts with LDB2. May interact with CITED2/MRG1.

Its subcellular location is the nucleus. Functionally, transcription factor. Recognizes and binds to the consensus sequence motif 5'-AATTAATTA-3' in the regulatory elements of target genes, such as glycoprotein hormones alpha chain CGA and visual system homeobox CHX10, positively modulating transcription; transcription can be co-activated by LDB2. Synergistically enhances transcription from the prolactin promoter in cooperation with POU1F1/Pit-1. Required for the establishment of the specialized cells of the pituitary gland and the nervous system. Involved in the development of interneurons and motor neurons in cooperation with LDB1 and ISL1. This is LIM/homeobox protein Lhx3 (LHX3) from Homo sapiens (Human).